Reading from the N-terminus, the 361-residue chain is Chorismate synthase (361 aa).

Residues arginine 48 and arginine 54 each coordinate NADP(+). Residues 125 to 127, 238 to 239, glycine 278, 293 to 297, and arginine 319 contribute to the FMN site; these read RSS, NA, and KPTSS.

It belongs to the chorismate synthase family. As to quaternary structure, homotetramer. It depends on FMNH2 as a cofactor.

It carries out the reaction 5-O-(1-carboxyvinyl)-3-phosphoshikimate = chorismate + phosphate. The protein operates within metabolic intermediate biosynthesis; chorismate biosynthesis; chorismate from D-erythrose 4-phosphate and phosphoenolpyruvate: step 7/7. In terms of biological role, catalyzes the anti-1,4-elimination of the C-3 phosphate and the C-6 proR hydrogen from 5-enolpyruvylshikimate-3-phosphate (EPSP) to yield chorismate, which is the branch point compound that serves as the starting substrate for the three terminal pathways of aromatic amino acid biosynthesis. This reaction introduces a second double bond into the aromatic ring system. The sequence is that of Chorismate synthase from Shigella flexneri serotype 5b (strain 8401).